The primary structure comprises 293 residues: Fructose-bisphosphate aldolase (293 aa).

D-glyceraldehyde 3-phosphate is bound at residue Ser-50. Asp-85 serves as the catalytic Proton donor. Zn(2+) contacts are provided by His-86, Asp-106, Glu-136, and His-178. Gly-179 provides a ligand contact to dihydroxyacetone phosphate. His-208 contacts Zn(2+). Dihydroxyacetone phosphate contacts are provided by residues 209-211 (GGS) and 230-233 (NVNT).

Belongs to the class II fructose-bisphosphate aldolase family. The cofactor is Zn(2+).

The catalysed reaction is beta-D-fructose 1,6-bisphosphate = D-glyceraldehyde 3-phosphate + dihydroxyacetone phosphate. Its pathway is carbohydrate degradation; glycolysis; D-glyceraldehyde 3-phosphate and glycerone phosphate from D-glucose: step 4/4. Its function is as follows. Catalyzes the aldol condensation of dihydroxyacetone phosphate (DHAP or glycerone-phosphate) with glyceraldehyde 3-phosphate (G3P) to form fructose 1,6-bisphosphate (FBP) in gluconeogenesis and the reverse reaction in glycolysis. The sequence is that of Fructose-bisphosphate aldolase (fba) from Streptococcus pyogenes serotype M6 (strain ATCC BAA-946 / MGAS10394).